Here is a 1234-residue protein sequence, read N- to C-terminus: ATP-dependent helicase/nuclease subunit A (1234 aa).

A UvrD-like helicase ATP-binding domain is found at 9-482; that stretch reads STWTDDQWEA…IDLNKNFRSR (474 aa). 30 to 37 lines the ATP pocket; the sequence is AAAGSGKT. Positions 509-800 constitute a UvrD-like helicase C-terminal domain; it reads QAELKLGASY…RMMTIHSSKG (292 aa).

It belongs to the helicase family. AddA subfamily. In terms of assembly, heterodimer of AddA and AddB/RexB. Mg(2+) serves as cofactor.

It catalyses the reaction Couples ATP hydrolysis with the unwinding of duplex DNA by translocating in the 3'-5' direction.. It carries out the reaction ATP + H2O = ADP + phosphate + H(+). The heterodimer acts as both an ATP-dependent DNA helicase and an ATP-dependent, dual-direction single-stranded exonuclease. Recognizes the chi site generating a DNA molecule suitable for the initiation of homologous recombination. The AddA nuclease domain is required for chi fragment generation; this subunit has the helicase and 3' -&gt; 5' nuclease activities. This Bacillus pumilus (strain SAFR-032) protein is ATP-dependent helicase/nuclease subunit A.